Consider the following 555-residue polypeptide: Potassium-transporting ATPase potassium-binding subunit (555 aa).

10 consecutive transmembrane segments (helical) span residues 2–22, 60–80, 130–150, 173–193, 246–266, 278–298, 374–394, 412–432, 483–503, and 525–545; these read IWVAVVITMLLFILVAKPTGI, QYALSLVLLNGFMIVVVYFIF, IGITFLMFAAPATTLALVMAF, VFLPIAFMAALVFVAFGVPQT, MSNILQMMLMMLLPTALPFTY, ILFVSLFMVFLLGFITITTSE, AGFVNIIMYAIIAVFISGLMV, LIAVTILFHPLLILGFSALAL, LVMFLGRYFSLITMLAVAASL, and GIFIGTIVIVGALTFFPMLVL.

The protein belongs to the KdpA family. The system is composed of three essential subunits: KdpA, KdpB and KdpC.

Its subcellular location is the cell membrane. Functionally, part of the high-affinity ATP-driven potassium transport (or Kdp) system, which catalyzes the hydrolysis of ATP coupled with the electrogenic transport of potassium into the cytoplasm. This subunit binds the extracellular potassium ions and delivers the ions to the membrane domain of KdpB through an intramembrane tunnel. In Bacillus cereus (strain ZK / E33L), this protein is Potassium-transporting ATPase potassium-binding subunit.